A 426-amino-acid polypeptide reads, in one-letter code: Adenylosuccinate synthetase (426 aa).

Residues 13–19 and 41–43 contribute to the GTP site; these read GDEGKGK and GHT. Residue Asp14 is the Proton acceptor of the active site. Residues Asp14 and Gly41 each contribute to the Mg(2+) site. Residues 14–17, 39–42, Thr129, Arg143, Gln224, Thr239, and Arg303 contribute to the IMP site; these read DEGK and NAGH. His42 (proton donor) is an active-site residue. 299 to 305 lines the substrate pocket; that stretch reads TTTGRPR. Residues Arg305, 331–333, and 414–416 each bind GTP; these read KLD and GTG.

It belongs to the adenylosuccinate synthetase family. As to quaternary structure, homodimer. Requires Mg(2+) as cofactor.

It localises to the cytoplasm. It carries out the reaction IMP + L-aspartate + GTP = N(6)-(1,2-dicarboxyethyl)-AMP + GDP + phosphate + 2 H(+). It participates in purine metabolism; AMP biosynthesis via de novo pathway; AMP from IMP: step 1/2. Its function is as follows. Plays an important role in the de novo pathway of purine nucleotide biosynthesis. Catalyzes the first committed step in the biosynthesis of AMP from IMP. This chain is Adenylosuccinate synthetase, found in Caldicellulosiruptor bescii (strain ATCC BAA-1888 / DSM 6725 / KCTC 15123 / Z-1320) (Anaerocellum thermophilum).